Reading from the N-terminus, the 219-residue chain is Large ribosomal subunit protein uL4 (219 aa).

The segment at 43–100 is disordered; that stretch reads AAKRQGTHSTKTRGEVSGGGKKPYRQKGTGRARQGSTRAPQFTGGGTVHGPQPRDYSQ.

Belongs to the universal ribosomal protein uL4 family. In terms of assembly, part of the 50S ribosomal subunit.

Functionally, one of the primary rRNA binding proteins, this protein initially binds near the 5'-end of the 23S rRNA. It is important during the early stages of 50S assembly. It makes multiple contacts with different domains of the 23S rRNA in the assembled 50S subunit and ribosome. Forms part of the polypeptide exit tunnel. The sequence is that of Large ribosomal subunit protein uL4 from Mycobacterium sp. (strain JLS).